Here is a 193-residue protein sequence, read N- to C-terminus: MNFLAHLHLAHLADSSLPGNLMADFVRGNPQGDYPAEIIDGIYMHRRIDVMTDNLAEVKEAREWFRPQTRRVAPITLDVMWDHFLSQHWAQLSPDLPLDEFVRYAERQIVPILPDSPPRFVNLNQYLWSERWLERYREMDFIQRVLNGMASRRPRLEALRDSWQDLDTHYDRLETQFWRFYPQMMRLAENKQL.

It belongs to the AcpH family.

The catalysed reaction is holo-[ACP] + H2O = apo-[ACP] + (R)-4'-phosphopantetheine + H(+). Its function is as follows. Converts holo-ACP to apo-ACP by hydrolytic cleavage of the phosphopantetheine prosthetic group from ACP. The polypeptide is Acyl carrier protein phosphodiesterase (Klebsiella pneumoniae subsp. pneumoniae (strain ATCC 700721 / MGH 78578)).